Consider the following 1295-residue polypeptide: DNA-directed RNA polymerase subunit beta' (1295 aa).

Zn(2+) is bound by residues C60, C62, C75, and C78. 3 residues coordinate Mg(2+): D516, D518, and D520. 4 residues coordinate Zn(2+): C841, C914, C921, and C924.

The protein belongs to the RNA polymerase beta' chain family. The RNAP catalytic core consists of 2 alpha, 1 beta, 1 beta' and 1 omega subunit. When a sigma factor is associated with the core the holoenzyme is formed, which can initiate transcription. Mg(2+) serves as cofactor. The cofactor is Zn(2+).

It catalyses the reaction RNA(n) + a ribonucleoside 5'-triphosphate = RNA(n+1) + diphosphate. DNA-dependent RNA polymerase catalyzes the transcription of DNA into RNA using the four ribonucleoside triphosphates as substrates. The sequence is that of DNA-directed RNA polymerase subunit beta' from Dehalococcoides mccartyi (strain ATCC BAA-2100 / JCM 16839 / KCTC 5957 / BAV1).